Consider the following 149-residue polypeptide: Transcriptional repressor NrdR (149 aa).

A zinc finger spans residues Cys3–Cys34. One can recognise an ATP-cone domain in the interval Pro49 to Glu139.

Belongs to the NrdR family. Requires Zn(2+) as cofactor.

Its function is as follows. Negatively regulates transcription of bacterial ribonucleotide reductase nrd genes and operons by binding to NrdR-boxes. This Escherichia fergusonii (strain ATCC 35469 / DSM 13698 / CCUG 18766 / IAM 14443 / JCM 21226 / LMG 7866 / NBRC 102419 / NCTC 12128 / CDC 0568-73) protein is Transcriptional repressor NrdR.